We begin with the raw amino-acid sequence, 775 residues long: MAPVGGGGRPVGGPARGRLLLAAPVLLVLLWALGARGQGSPQQGTIVGMRLASCNKSCGTNPDGIIFVSEGSTVNLRLYGYSLGNISSNLISFTEVDDAETLHKSTSCLELTKDLVVQQLVNVSRGNTSGVLVVLTKFLRRSESMKLYALCTRAQPDGPWLKWTDKDSLLFMVEEPGRFLPLWLHILLITVLLVLSGIFSGLNLGLMALDPMELRIVQNCGTEKERRYARKIEPIRRKGNYLLCSLLLGNVLVNTSLTILLDNLIGSGLMAVASSTIGIVIFGEILPQALCSRHGLAVGANTILLTKFFMLLTFPLSFPISKLLDFFLGQEIRTVYNREKLMEMLKVTEPYNDLVKEELNMIQGALELRTKTVEDIMTQLQDCFMIRSDAILDFNTMSEIMESGYTRIPVFEDEQSNIVDILYVKDLAFVDPDDCTPLKTITRFYNHPVHFVFHDTKLDAMLEEFKKGKSHLAIVQKVNNEGEGDPFYEVLGLVTLEDVIEEIIKSEILDESDMYTDNRSRKRVSEKNKRDFSAFKDADNELKVKISPQLLLAAHRFLATEVSQFSPSLISEKILLRLLKYPDVIQELKFDEHNKYYARHYLYTRNKPADYFILILQGKVEVEAGKENMKFETGAFSYYGTMALTSVPSDRSPAHPTPLSRSASLSYPDRTDVSTAATLAGSSNQFGSSVLGQYISDFSVRALVDLQYIKITRQQYQNGLLASRMENSPQFPIDGCTTHMENLAEKSELPVVDETTTLLNERNSLLHKASHENAI.

Topologically, residues 1–178 are extracellular; that stretch reads MAPVGGGGRP…LLFMVEEPGR (178 aa). N-linked (GlcNAc...) asparagine glycosylation is found at Asn-85 and Asn-122. Positions 178-358 constitute a CNNM transmembrane domain; sequence RFLPLWLHIL…EPYNDLVKEE (181 aa). Residues 179 to 199 form a helical membrane-spanning segment; that stretch reads FLPLWLHILLITVLLVLSGIF. Over 200–240 the chain is Cytoplasmic; that stretch reads SGLNLGLMALDPMELRIVQNCGTEKERRYARKIEPIRRKGN. An intramembrane region (helical) is located at residues 241-261; it reads YLLCSLLLGNVLVNTSLTILL. Over 262-264 the chain is Cytoplasmic; the sequence is DNL. Residues 265–285 traverse the membrane as a helical segment; the sequence is IGSGLMAVASSTIGIVIFGEI. Residues 286 to 293 are Extracellular-facing; it reads LPQALCSR. A helical transmembrane segment spans residues 294–316; the sequence is HGLAVGANTILLTKFFMLLTFPL. Residues 317–775 are Cytoplasmic-facing; the sequence is SFPISKLLDF…LHKASHENAI (459 aa). 2 consecutive CBS domains span residues 377 to 438 and 445 to 511; these read MTQL…CTPL and YNHP…ILDE. Phosphoserine occurs at positions 660, 664, and 770.

Belongs to the ACDP family. In terms of assembly, interacts with COX11. In terms of tissue distribution, widely expressed. Highly expressed in heart.

It localises to the cell membrane. Functionally, probable metal transporter. The interaction with the metal ion chaperone COX11 suggests that it may play a role in sensory neuron functions. May play a role in biomineralization and retinal function. In Homo sapiens (Human), this protein is Metal transporter CNNM4 (CNNM4).